Consider the following 474-residue polypeptide: Na(+)/H(+) antiporter NhaA 3 (474 aa).

Transmembrane regions (helical) follow at residues 31 to 51, 73 to 93, 110 to 130, 141 to 161, 171 to 191, 194 to 214, 220 to 240, 280 to 300, 309 to 329, 347 to 367, and 378 to 398; these read VGGV…NIPA, LSVA…VAGI, AALP…VYTV, GWAV…AVIG, FLLT…AVFF, TLNF…WLLL, GWYV…NSGV, LAVP…GALA, LGVV…GTWL, VFAV…IGEL, and EVKA…TVLL.

Belongs to the NhaA Na(+)/H(+) (TC 2.A.33) antiporter family.

Its subcellular location is the cell membrane. It carries out the reaction Na(+)(in) + 2 H(+)(out) = Na(+)(out) + 2 H(+)(in). Functionally, na(+)/H(+) antiporter that extrudes sodium in exchange for external protons. The polypeptide is Na(+)/H(+) antiporter NhaA 3 (Streptomyces coelicolor (strain ATCC BAA-471 / A3(2) / M145)).